A 574-amino-acid polypeptide reads, in one-letter code: Lengsin (574 aa).

Disordered regions lie at residues 1-36 (MNDE…KVTK) and 66-131 (GNMS…IPTT). The span at 11-23 (NTRDEGNETEASR) shows a compositional bias: basic and acidic residues. The span at 25–36 (SKLRRTRKKVTK) shows a compositional bias: basic residues. A compositionally biased stretch (polar residues) spans 91 to 131 (NQTTVIKPSPLKTSASAPCSEFNTNSNHADNTWEDTQIPTT). The region spanning 148–242 (NHLQFVRFEA…VICDTFTVTG (95 aa)) is the GS beta-grasp domain. One can recognise a GS catalytic domain in the interval 249–574 (PRYIAKRQLS…ERNKFLEYFI (326 aa)).

This sequence belongs to the glutamine synthetase family. Dodecamer. Interacts with BFSP2 and VIM.

In terms of biological role, may act as a component of the cytoskeleton or as a chaperone for the reorganization of intermediate filament proteins during terminal differentiation in the lens. Does not seem to have enzymatic activity. The protein is Lengsin (LGSN) of Canis lupus familiaris (Dog).